The chain runs to 360 residues: 8-hydroxygeraniol dehydrogenase (360 aa).

The Zn(2+) site is built by cysteine 50, histidine 72, cysteine 103, cysteine 106, cysteine 109, cysteine 117, and cysteine 166.

The protein belongs to the zinc-containing alcohol dehydrogenase family. Requires Zn(2+) as cofactor. Present in seedlings and vascular tissues (at protein level). Restricted to the epidermis.

The enzyme catalyses (6E)-8-hydroxygeraniol + 2 NADP(+) = (6E)-8-oxogeranial + 2 NADPH + 2 H(+). Its function is as follows. Dehydrogenase involved in the biosynthesis of oxogeranial from hydroxygeraniol, a precursor of the terpenoid indole alkaloids such as vinblastine and vincristine. This Catharanthus roseus (Madagascar periwinkle) protein is 8-hydroxygeraniol dehydrogenase (10HGO).